We begin with the raw amino-acid sequence, 326 residues long: Isoaspartyl peptidase/L-asparaginase (326 aa).

The active-site Nucleophile is the Thr185. Substrate-binding positions include 213 to 216 (RVGD) and 236 to 239 (TGHG).

It belongs to the Ntn-hydrolase family. As to quaternary structure, heterodimer of an alpha and beta chain produced by autocleavage. This heterodimer may then dimerize in turn, giving rise to a heterotetramer. In terms of processing, cleaved into an alpha and beta chain by autocatalysis; this activates the enzyme. The N-terminal residue of the beta subunit is responsible for the nucleophile hydrolase activity. As to expression, high expression in the heart and brain while low to minimal expression in the other tissues. In ocular tissues, high levels is observed in the optic nerve and retina while relatively low levels of expression are detected in the iris-ciliary body, lens or retinal pigment epithelium.

Its subcellular location is the cytoplasm. It catalyses the reaction L-asparagine + H2O = L-aspartate + NH4(+). The enzyme catalyses Cleavage of a beta-linked Asp residue from the N-terminus of a polypeptide.. Functionally, has both L-asparaginase and beta-aspartyl peptidase activity. May be involved in the production of L-aspartate, which can act as an excitatory neurotransmitter in some brain regions. Is highly active with L-Asp beta-methyl ester. Besides, has catalytic activity toward beta-aspartyl dipeptides and their methyl esters, including beta-L-Asp-L-Phe, beta-L-Asp-L-Phe methyl ester (aspartame), beta-L-Asp-L-Ala, beta-L-Asp-L-Leu and beta-L-Asp-L-Lys. Does not have aspartylglucosaminidase activity and is inactive toward GlcNAc-L-Asn. Likewise, has no activity toward glutamine. The chain is Isoaspartyl peptidase/L-asparaginase (Asrgl1) from Mus musculus (Mouse).